The sequence spans 398 residues: Acetate kinase (398 aa).

Asparagine 7 is a binding site for Mg(2+). Lysine 14 lines the ATP pocket. Residue arginine 96 coordinates substrate. The active-site Proton donor/acceptor is aspartate 153. Residues 210–214 (HLGNG), 284–286 (DLR), and 332–336 (GIGEH) contribute to the ATP site. Mg(2+) is bound at residue glutamate 385.

The protein belongs to the acetokinase family. Homodimer. Mg(2+) serves as cofactor. The cofactor is Mn(2+).

It localises to the cytoplasm. The catalysed reaction is acetate + ATP = acetyl phosphate + ADP. Its pathway is metabolic intermediate biosynthesis; acetyl-CoA biosynthesis; acetyl-CoA from acetate: step 1/2. Functionally, catalyzes the formation of acetyl phosphate from acetate and ATP. Can also catalyze the reverse reaction. This is Acetate kinase from Acaryochloris marina (strain MBIC 11017).